The primary structure comprises 459 residues: Protein FAM90A27P (459 aa).

Positions 1-10 (MARHSVHHQA) are enriched in basic residues. 4 disordered regions span residues 1-41 (MARH…ESRV), 74-136 (SHKE…WKEP), 153-239 (HTTK…ALQP), and 259-459 (PDAD…SDSD). Positions 125-136 (PQEKMQEAWKEP) are enriched in basic and acidic residues. A compositionally biased stretch (polar residues) spans 184–194 (HNDSPQLSTCG). Positions 341–353 (KATAETAATKTAT) are enriched in low complexity. Polar residues predominate over residues 415 to 427 (PPENSASAQSPRF).

This sequence belongs to the FAM90 family.

The sequence is that of Protein FAM90A27P (FAM90A27P) from Homo sapiens (Human).